The following is a 444-amino-acid chain: Ras-related protein RabX (444 aa).

Position 29–36 (29–36 (GGDVCSKN)) interacts with GTP. The Effector region signature appears at 51-58 (LIQVFDDY). 73-77 (EFSSI) is a binding site for GTP. The interval 91–136 (ENNKNKNNNNNYNYNNNNYNNNNNNNNNNNNNNNNNNNNNNNNNNS) is disordered. The span at 95–135 (NKNNNNNYNYNNNNYNNNNNNNNNNNNNNNNNNNNNNNNNN) shows a compositional bias: low complexity. 207–210 (NDSN) serves as a coordination point for GTP. 2 disordered regions span residues 213–232 (TPNF…SNII) and 298–401 (LQGD…NNDL). Composition is skewed to low complexity over residues 217 to 232 (SDSS…SNII) and 303 to 399 (NNNN…TYNN). Residue cysteine 439 is the site of S-palmitoyl cysteine attachment. Cysteine 441 bears the Cysteine methyl ester mark. Cysteine 441 carries the S-geranylgeranyl cysteine lipid modification. The propeptide at 442 to 444 (NLM) is removed in mature form.

This sequence belongs to the small GTPase superfamily. Rab family.

The protein resides in the cell membrane. This Dictyostelium discoideum (Social amoeba) protein is Ras-related protein RabX (rabX).